Here is a 784-residue protein sequence, read N- to C-terminus: Protein-tyrosine-phosphatase MKP1 (784 aa).

Disordered stretches follow at residues 1-73 and 94-118; these read MVGR…NSKA and PKAG…TGER. Over residues 22–34 the composition is skewed to low complexity; the sequence is WRSASWSASRTAS. A phosphothreonine mark is found at Thr64 and Thr109. A Tyrosine-protein phosphatase domain is found at 149–291; that stretch reads ECSKVADHIY…LLQCQKRVHA (143 aa). Cys235 serves as the catalytic Phosphocysteine intermediate. 235 to 241 is a binding site for substrate; it reads CCQGVSR. The interval 488–586 is disordered; the sequence is HSSGSPSSTT…ASPSLAERRG (99 aa). 2 stretches are compositionally biased toward low complexity: residues 489–510 and 521–553; these read SSGS…FLSP and SLKS…LSLL. Over residues 554–577 the composition is skewed to polar residues; it reads PSQTSPKESRGVNTFLQPSPNRKA. Residues Ser558 and Ser572 each carry the phosphoserine modification.

As to quaternary structure, interacts with MPK6. May interact with MPK3 and MPK4. Phosphorylated on threonine and serine residues by MPK6.

Its subcellular location is the cytoplasm. It is found in the cytosol. It catalyses the reaction O-phospho-L-tyrosyl-[protein] + H2O = L-tyrosyl-[protein] + phosphate. In terms of biological role, protein-tyrosine-phosphatase that acts as a negative regulator of MPK6 and MPK3 signaling by dephosphorylating and repressing MPK6 and MPK3. Modulates defense response by repressing salicylic acid (SA) production, camalexin biosynthesis and SNC1-mediated responses. Acts as a negative regulator of MPK6-mediated pathogen-associated molecular pattern (PAMP) responses, including MPK6 and MPK3 activation, accumulation of extracellular reactive oxygen species and inhibition of seedling growth. Involved in UV-B stress tolerance. May be involved in salt and genotoxic stress responses. The protein is Protein-tyrosine-phosphatase MKP1 (MKP1) of Arabidopsis thaliana (Mouse-ear cress).